We begin with the raw amino-acid sequence, 127 residues long: Small ribosomal subunit protein uS11 (127 aa).

This sequence belongs to the universal ribosomal protein uS11 family. In terms of assembly, part of the 30S ribosomal subunit. Interacts with proteins S7 and S18. Binds to IF-3.

Its function is as follows. Located on the platform of the 30S subunit, it bridges several disparate RNA helices of the 16S rRNA. Forms part of the Shine-Dalgarno cleft in the 70S ribosome. The sequence is that of Small ribosomal subunit protein uS11 from Streptococcus thermophilus (strain CNRZ 1066).